The chain runs to 198 residues: Peptidyl-tRNA hydrolase (198 aa).

Tyrosine 14 serves as a coordination point for tRNA. The active-site Proton acceptor is histidine 19. 3 residues coordinate tRNA: tyrosine 64, asparagine 66, and asparagine 112.

This sequence belongs to the PTH family. As to quaternary structure, monomer.

The protein resides in the cytoplasm. The enzyme catalyses an N-acyl-L-alpha-aminoacyl-tRNA + H2O = an N-acyl-L-amino acid + a tRNA + H(+). In terms of biological role, hydrolyzes ribosome-free peptidyl-tRNAs (with 1 or more amino acids incorporated), which drop off the ribosome during protein synthesis, or as a result of ribosome stalling. Functionally, catalyzes the release of premature peptidyl moieties from peptidyl-tRNA molecules trapped in stalled 50S ribosomal subunits, and thus maintains levels of free tRNAs and 50S ribosomes. The protein is Peptidyl-tRNA hydrolase of Beijerinckia indica subsp. indica (strain ATCC 9039 / DSM 1715 / NCIMB 8712).